The chain runs to 684 residues: Nuclear transcription factor Y subunit gamma (684 aa).

Disordered regions lie at residues 1 to 74 (MENQ…NIST), 112 to 238 (MNSP…SSFQ), 414 to 487 (HSPQ…TQQL), and 511 to 650 (QQQQ…KNDE). A compositionally biased stretch (low complexity) spans 21–49 (SNSHNNHHNNNNNNNYNNNNNNNINNINN). The span at 58 to 74 (KSIQQHSPHSSTPNIST) shows a compositional bias: polar residues. Over residues 142–162 (HQHPSSASSSSSSSSSSLSSS) the composition is skewed to low complexity. The segment covering 163–176 (SHHHHSNHHHHHPN) has biased composition (basic residues). Over residues 188–203 (PSLNDSSSNGNGTPAL) the composition is skewed to polar residues. Low complexity predominate over residues 220–238 (TPTSTPNQRFQSNGSSSFQ). Residues 414–423 (HSPQLQEQSS) are compositionally biased toward polar residues. The segment covering 424–437 (NNNNNNNNNNNNNN) has biased composition (low complexity). 2 stretches are compositionally biased toward polar residues: residues 438-456 (SVSV…SPLS) and 464-477 (SQDY…NNHN). 3 stretches are compositionally biased toward low complexity: residues 478-487 (QSSLSQTQQL), 511-522 (QQQQHSQQISQQ), and 529-637 (PSNS…NNNN).

It belongs to the NFYC/HAP5 subunit family. In terms of assembly, heterotrimeric transcription factor composed of three components, NF-YA, NF-YB and NF-YC. NF-YB and NF-YC must interact and dimerize for NF-YA association and DNA binding.

The protein resides in the nucleus. Functionally, stimulates the transcription of various genes by recognizing and binding to a CCAAT motif in promoters. The protein is Nuclear transcription factor Y subunit gamma (nfyc-1) of Dictyostelium discoideum (Social amoeba).